We begin with the raw amino-acid sequence, 357 residues long: Peptide chain release factor 1 (357 aa).

Gln-234 carries the N5-methylglutamine modification. Residues 283-313 form a disordered region; the sequence is SKKQEQRSSNRKQQVGSGDRSERIRTYNFPQ.

It belongs to the prokaryotic/mitochondrial release factor family. In terms of processing, methylated by PrmC. Methylation increases the termination efficiency of RF1.

Its subcellular location is the cytoplasm. Its function is as follows. Peptide chain release factor 1 directs the termination of translation in response to the peptide chain termination codons UAG and UAA. In Borreliella burgdorferi (strain ATCC 35210 / DSM 4680 / CIP 102532 / B31) (Borrelia burgdorferi), this protein is Peptide chain release factor 1 (prfA).